The chain runs to 368 residues: Repressor ROX1 (368 aa).

Residues 10-83 (IPRPKNAFIL…EHERKYPEYK (74 aa)) constitute a DNA-binding region (HMG box). Disordered regions lie at residues 100 to 121 (IEQQQQQQQKEQQQQKQSQPQL) and 242 to 273 (SSQTPVTTTTTSTTTATSSPGKFSSSPNSSVL). Positions 102-121 (QQQQQQQKEQQQQKQSQPQL) are enriched in low complexity.

The protein resides in the nucleus. Its function is as follows. Transcription factor that represses the expression of HEM13, COX5B, ANB1, CYC7 or AAC3 (hypoxic function). Binds to the DNA sequence 5'-RRRTAACAAGAG-3'. The polypeptide is Repressor ROX1 (ROX1) (Saccharomyces cerevisiae (strain ATCC 204508 / S288c) (Baker's yeast)).